Consider the following 1120-residue polypeptide: ISWI chromatin-remodeling complex ATPase ISW2 (1120 aa).

Basic and acidic residues predominate over residues Met-1–Lys-16. Disordered regions lie at residues Met-1 to Arg-58 and Leu-129 to Glu-153. Residues Ser-17 and Ser-19 each carry the phosphoserine modification. The span at Leu-47–Arg-58 shows a compositional bias: basic and acidic residues. The region spanning Ile-196–Asp-361 is the Helicase ATP-binding domain. Position 209-216 (Asp-209–Thr-216) interacts with ATP. Positions Asp-312–His-315 match the DEAH box motif. The Helicase C-terminal domain maps to Ile-494–Lys-645. Disordered stretches follow at residues Gly-764 to Pro-783 and Asn-828 to Glu-853. Ser-831 carries the post-translational modification Phosphoserine. The region spanning Lys-886–Lys-938 is the SANT domain. The disordered stretch occupies residues Pro-1062–Ala-1120. Thr-1079 bears the Phosphothreonine mark. The span at Pro-1080 to Lys-1104 shows a compositional bias: polar residues. Ser-1082 is modified (phosphoserine). The span at Asp-1105–Ala-1120 shows a compositional bias: basic and acidic residues.

It belongs to the SNF2/RAD54 helicase family. ISWI subfamily. As to quaternary structure, component of the ISW2 complex, which at least consists of ISW2, ITC1, DLS1 and DPB4. May form a stable subcomplex with ITC1.

It is found in the nucleus. Its function is as follows. Catalytic component of the ISW2 complex, which acts in remodeling the chromatin by catalyzing an ATP-dependent alteration in the structure of nucleosomal DNA. The ISW2 complex is involved in coordinating transcriptional repression and in inheritance of telomeric silencing. It is involved in repression of MAT a-specific genes, INO1, and early meiotic genes during mitotic growth dependent upon transcription factor UME6 and in a parallel pathway to the RPD3-SIN3 histone deacetylase complex. The chain is ISWI chromatin-remodeling complex ATPase ISW2 (ISW2) from Saccharomyces cerevisiae (strain ATCC 204508 / S288c) (Baker's yeast).